Reading from the N-terminus, the 473-residue chain is Photosystem II CP43 reaction center protein (473 aa).

A propeptide spanning residues 1–14 (MKTLYSLRRFYPVE) is cleaved from the precursor. Threonine 15 bears the N-acetylthreonine mark. The residue at position 15 (threonine 15) is a Phosphothreonine. Helical transmembrane passes span 69-93 (LFEVAHFVPEKPMYEQGLILLPHLA), 134-155 (LIGPETLEESFPFFGYVWKDKN), 178-200 (KALYFGGVYDTWAPGGGDVRKIT), 255-275 (KPFAWARRAFIWSGEAYLSYS), and 291-312 (WFNNTAYPSEFYGPTGPEASQA). A [CaMn4O5] cluster-binding site is contributed by glutamate 367. Residues 447-471 (RARAAAAGFEKGIDRDTEPVLSMTP) form a helical membrane-spanning segment.

This sequence belongs to the PsbB/PsbC family. PsbC subfamily. In terms of assembly, PSII is composed of 1 copy each of membrane proteins PsbA, PsbB, PsbC, PsbD, PsbE, PsbF, PsbH, PsbI, PsbJ, PsbK, PsbL, PsbM, PsbT, PsbX, PsbY, PsbZ, Psb30/Ycf12, at least 3 peripheral proteins of the oxygen-evolving complex and a large number of cofactors. It forms dimeric complexes. It depends on Binds multiple chlorophylls and provides some of the ligands for the Ca-4Mn-5O cluster of the oxygen-evolving complex. It may also provide a ligand for a Cl- that is required for oxygen evolution. PSII binds additional chlorophylls, carotenoids and specific lipids. as a cofactor.

The protein resides in the plastid. The protein localises to the chloroplast thylakoid membrane. Its function is as follows. One of the components of the core complex of photosystem II (PSII). It binds chlorophyll and helps catalyze the primary light-induced photochemical processes of PSII. PSII is a light-driven water:plastoquinone oxidoreductase, using light energy to abstract electrons from H(2)O, generating O(2) and a proton gradient subsequently used for ATP formation. The polypeptide is Photosystem II CP43 reaction center protein (Angiopteris evecta (Mule's foot fern)).